Here is a 1184-residue protein sequence, read N- to C-terminus: von Willebrand factor A domain-containing protein 3A (1184 aa).

Residues 1–24 (MKKYRKISIGCFAMATQTSHVFHG) form the signal peptide. Residues 40 to 62 (GRDSKKPLKQKNMNGLGQNSDNG) are disordered. Residues 50–62 (KNMNGLGQNSDNG) are compositionally biased toward polar residues. Residues 333 to 357 (TSRDMDELLAEIQKAQSLLSHVQAL) adopt a coiled-coil conformation. One can recognise a VWFA 1 domain in the interval 511–708 (RVVVLLDISA…SIMSEMEKAL (198 aa)). A glycan (N-linked (GlcNAc...) asparagine) is linked at N709. Residues 729–780 (LGSSALPKEKPKTLQLRSQPKKLCPPRPTVPLGARMSIKDDPDREKSPPLKS) form a disordered region. The segment covering 765–776 (SIKDDPDREKSP) has biased composition (basic and acidic residues). In terms of domain architecture, VWFA 2 spans 959-1131 (KVCILLDTSG…KIHSLLTKGF (173 aa)).

The protein resides in the secreted. This is von Willebrand factor A domain-containing protein 3A (VWA3A) from Homo sapiens (Human).